A 259-amino-acid chain; its full sequence is MTDLKASSLRALKLMDLTTLNDDDTDEKVIALCHQTKTPVGNTAAICIYPRFIPIARKTLKEQGTPEIRIATVTNFPHGNDDIEIALAETRAAIAYGADEVDVVFPYRALMAGNEQVGFDLVKACKEACAAANVLLKVIIETGELKDEALIRKASEISIKAGADFIKTSTGKVAVNATPESARIMMEVIRDMGVEKTVGFKPAGGVRTAEDAQKYLAIADELFGADWADARHYRFGASSLLASLLKALGHGDGKSASSY.

Residue Asp-102 is the Proton donor/acceptor of the active site. Catalysis depends on Lys-167, which acts as the Schiff-base intermediate with acetaldehyde. Lys-201 serves as the catalytic Proton donor/acceptor.

The protein belongs to the DeoC/FbaB aldolase family. DeoC type 2 subfamily.

It is found in the cytoplasm. The enzyme catalyses 2-deoxy-D-ribose 5-phosphate = D-glyceraldehyde 3-phosphate + acetaldehyde. It functions in the pathway carbohydrate degradation; 2-deoxy-D-ribose 1-phosphate degradation; D-glyceraldehyde 3-phosphate and acetaldehyde from 2-deoxy-alpha-D-ribose 1-phosphate: step 2/2. Its function is as follows. Catalyzes a reversible aldol reaction between acetaldehyde and D-glyceraldehyde 3-phosphate to generate 2-deoxy-D-ribose 5-phosphate. This chain is Deoxyribose-phosphate aldolase, found in Shigella boydii serotype 4 (strain Sb227).